We begin with the raw amino-acid sequence, 295 residues long: Glutamyl-Q tRNA(Asp) synthetase (295 aa).

Residues 9 to 13 (RFAPT) and E45 each bind L-glutamate. A 'HIGH' region motif is present at residues 12 to 22 (PTPSGYLHFGS). Zn(2+) is bound by residues C101, C103, Y115, and C119. L-glutamate contacts are provided by Y172 and R190. Positions 228–232 (KLGKS) match the 'KMSKS' region motif. Residue K231 coordinates ATP.

Belongs to the class-I aminoacyl-tRNA synthetase family. GluQ subfamily. Requires Zn(2+) as cofactor.

Functionally, catalyzes the tRNA-independent activation of glutamate in presence of ATP and the subsequent transfer of glutamate onto a tRNA(Asp). Glutamate is transferred on the 2-amino-5-(4,5-dihydroxy-2-cyclopenten-1-yl) moiety of the queuosine in the wobble position of the QUC anticodon. The sequence is that of Glutamyl-Q tRNA(Asp) synthetase from Pseudomonas syringae pv. syringae (strain B728a).